The chain runs to 258 residues: Imidazole glycerol phosphate synthase subunit HisF (258 aa).

Catalysis depends on residues Asp11 and Asp130.

The protein belongs to the HisA/HisF family. As to quaternary structure, heterodimer of HisH and HisF.

The protein localises to the cytoplasm. The enzyme catalyses 5-[(5-phospho-1-deoxy-D-ribulos-1-ylimino)methylamino]-1-(5-phospho-beta-D-ribosyl)imidazole-4-carboxamide + L-glutamine = D-erythro-1-(imidazol-4-yl)glycerol 3-phosphate + 5-amino-1-(5-phospho-beta-D-ribosyl)imidazole-4-carboxamide + L-glutamate + H(+). The protein operates within amino-acid biosynthesis; L-histidine biosynthesis; L-histidine from 5-phospho-alpha-D-ribose 1-diphosphate: step 5/9. IGPS catalyzes the conversion of PRFAR and glutamine to IGP, AICAR and glutamate. The HisF subunit catalyzes the cyclization activity that produces IGP and AICAR from PRFAR using the ammonia provided by the HisH subunit. The protein is Imidazole glycerol phosphate synthase subunit HisF of Azorhizobium caulinodans (strain ATCC 43989 / DSM 5975 / JCM 20966 / LMG 6465 / NBRC 14845 / NCIMB 13405 / ORS 571).